A 60-amino-acid polypeptide reads, in one-letter code: Large ribosomal subunit protein bL33 (60 aa).

It belongs to the bacterial ribosomal protein bL33 family.

The polypeptide is Large ribosomal subunit protein bL33 (Chlorobium chlorochromatii (strain CaD3)).